The sequence spans 559 residues: MAKEVVYRGSARQRMMQGIEILARAAIPTLGATGPSVMIQHRADGLPPISTRDGVTVANSIVLKDRVANLGARLLRDVAGTMSREAGDGTTTAIVLARHIAREMFKSLAVGADPIALKRGIDRAVARVSEDIGARAWRGDKESVILGVAAVATKGEPGVGRLLLEALDAVGVHGAVSIELGQRREDLLDVVDGYRWEKGYLSPYFVTDRARELAELEDVYLLMTDREVVDFIDLVPLLEAVTEAGGSLLIAADRVHEKALAGLLLNHVRGVFKAVAVTAPGFGDKRPNRLLDLAALTGGRAVLEAQGDRLDRVTLADLGRVRRAVVSADDTALLGIPGTEASRARLEGLRLEAEQYRALKPGQGSATGRLHELEEIEARIVGLSGKSAVYRVGGVTDVEMKERMVRIENAYRSVVSALEEGVLPGGGVGFLGSMPVLAELEARDADEARGIGIVRSALTEPLRIIGENSGLSGEAVVAKVMDHANPGWGYDQESGSFCDLHARGIWDAAKVLRLALEKAASVAGTFLTTEAVVLEIPDTDAFAGFSAEWAAATREDPRV.

ATP contacts are provided by residues 88-92 (DGTTT), G426, and D507.

Belongs to the chaperonin (HSP60) family. As to quaternary structure, forms a cylinder of 14 subunits composed of two heptameric rings stacked back-to-back. Interacts with the co-chaperonin GroES.

The protein localises to the cytoplasm. The enzyme catalyses ATP + H2O + a folded polypeptide = ADP + phosphate + an unfolded polypeptide.. In terms of biological role, together with its co-chaperonin GroES, plays an essential role in assisting protein folding. The GroEL-GroES system forms a nano-cage that allows encapsulation of the non-native substrate proteins and provides a physical environment optimized to promote and accelerate protein folding. The sequence is that of Chaperonin GroEL 3 from Methylococcus capsulatus (strain ATCC 33009 / NCIMB 11132 / Bath).